Consider the following 179-residue polypeptide: Orotate phosphoribosyltransferase (179 aa).

Residues Arg-94, Lys-95, Lys-98, His-100, and 120 to 128 each bind 5-phospho-alpha-D-ribose 1-diphosphate; that span reads EDTSTTGNS. 2 residues coordinate orotate: Thr-124 and Arg-152.

It belongs to the purine/pyrimidine phosphoribosyltransferase family. PyrE subfamily. As to quaternary structure, homodimer. Requires Mg(2+) as cofactor.

The enzyme catalyses orotidine 5'-phosphate + diphosphate = orotate + 5-phospho-alpha-D-ribose 1-diphosphate. The protein operates within pyrimidine metabolism; UMP biosynthesis via de novo pathway; UMP from orotate: step 1/2. In terms of biological role, catalyzes the transfer of a ribosyl phosphate group from 5-phosphoribose 1-diphosphate to orotate, leading to the formation of orotidine monophosphate (OMP). This chain is Orotate phosphoribosyltransferase, found in Mycobacterium bovis (strain ATCC BAA-935 / AF2122/97).